We begin with the raw amino-acid sequence, 220 residues long: Phosphopantothenoylcysteine decarboxylase (220 aa).

Residues 29–31 and 54–56 each bind FMN; these read GSV and TKA. Histidine 91 (proton donor) is an active-site residue. FMN is bound by residues 107–110 and alanine 141; that span reads SANT. The N-[(R)-4-phosphopantothenoyl]-L-cysteine site is built by asparagine 143, arginine 173, and alanine 175. Cysteine 176 serves as the catalytic Proton donor. Methionine 184 serves as a coordination point for N-[(R)-4-phosphopantothenoyl]-L-cysteine.

Belongs to the HFCD (homooligomeric flavin containing Cys decarboxylase) superfamily. As to quaternary structure, forms homotrimers. Interacts with HIP1. Interacts with HD1 in the dark. It depends on FMN as a cofactor. Expressed in root meristem, shoot apical meristem (SAM), intercalary meristem, floral meristem, embryo and tip of the coleoptile before true leaf emergence.

The protein resides in the nucleus. The enzyme catalyses N-[(R)-4-phosphopantothenoyl]-L-cysteine + H(+) = (R)-4'-phosphopantetheine + CO2. It functions in the pathway cofactor biosynthesis; coenzyme A biosynthesis; CoA from (R)-pantothenate: step 3/5. Its function is as follows. Catalyzes the decarboxylation of 4'-phosphopantothenoylcysteine to 4'-phosphopantetheine, a key step in coenzyme A biosynthesis. Involved in salt and osmotic tolerance, and light-regulated plant growth. Trimerization of HAL3 recruits and activates the E3 ubiquitin-protein ligase HIP1, which leads to the degradation of cell cycle suppressors, resulting in enhancement of cell division and plant growth. HAL3 function in cell division seems to be independent from its PPC decarboxylase activity. Acts as a positive regulator of flowering by binding to HD1 in the dark. The chain is Phosphopantothenoylcysteine decarboxylase from Oryza sativa subsp. japonica (Rice).